The chain runs to 152 residues: MSGAIRIDAQQLPHAEGLPLPAYHSSQAAGLDLMAAVPEQTPLVLAAGQYAMVPTGLIIALPDGFEAQVRPRSGLAAKHGVTVLNSPGTVDADYRGEINVLLVNLGNAPFTIRRGERIAQMIVAPVTRVELARAVSLSATSRGSGGFGSTGR.

Substrate is bound by residues 72 to 74 (RSG), asparagine 85, and 89 to 91 (TVD).

This sequence belongs to the dUTPase family. Mg(2+) is required as a cofactor.

It catalyses the reaction dUTP + H2O = dUMP + diphosphate + H(+). It functions in the pathway pyrimidine metabolism; dUMP biosynthesis; dUMP from dCTP (dUTP route): step 2/2. Its function is as follows. This enzyme is involved in nucleotide metabolism: it produces dUMP, the immediate precursor of thymidine nucleotides and it decreases the intracellular concentration of dUTP so that uracil cannot be incorporated into DNA. The polypeptide is Deoxyuridine 5'-triphosphate nucleotidohydrolase (Nitrobacter hamburgensis (strain DSM 10229 / NCIMB 13809 / X14)).